Reading from the N-terminus, the 169-residue chain is Lipoprotein signal peptidase (169 aa).

4 helical membrane passes run 4–24 (PICSTGLRWLWLAVVVVILDI), 29–49 (WVMAHFALYESVPLIPFFNLT), 70–90 (WFFAGIAIGISVVLMVMMYRS), and 101–121 (YALIIGGALGNLYDRLVHGAV). Residues Asp123 and Asp141 contribute to the active site. The chain crosses the membrane as a helical span at residues 137 to 157 (FNLADVAICIGAALVIFEGFL).

This sequence belongs to the peptidase A8 family.

It is found in the cell inner membrane. It carries out the reaction Release of signal peptides from bacterial membrane prolipoproteins. Hydrolyzes -Xaa-Yaa-Zaa-|-(S,diacylglyceryl)Cys-, in which Xaa is hydrophobic (preferably Leu), and Yaa (Ala or Ser) and Zaa (Gly or Ala) have small, neutral side chains.. The protein operates within protein modification; lipoprotein biosynthesis (signal peptide cleavage). In terms of biological role, this protein specifically catalyzes the removal of signal peptides from prolipoproteins. The polypeptide is Lipoprotein signal peptidase (Yersinia pestis bv. Antiqua (strain Antiqua)).